A 456-amino-acid chain; its full sequence is Divalent metal cation transporter MntH (456 aa).

The next 11 membrane-spanning stretches (helical) occupy residues 47–67 (ALSFFGPGYLVAVGYMDPGNW), 77–97 (FGYALLSVVLLSNLMAVLLQA), 123–143 (AWPLWLLAELAICATDLAEVI), 151–171 (LLFGIPLEIGVILTAVDVLLV), 184–204 (ALIITLLGVIALCFLTQIIMA), 227–247 (MLYIALGIIGATVMPHNLYLH), 276–296 (IALTFALVINASILILAAASF), 316–336 (PLLGSAIAPALFAIALLCCGL), 369–389 (FVAIVPAAIVTILYGSQGTTE), 392–412 (ILSQVVLSLQLPFAVIPLVIF), and 422–442 (LAAAPWVTFLAAITAAIIVVL).

Belongs to the NRAMP family.

Its subcellular location is the cell inner membrane. Functionally, h(+)-stimulated, divalent metal cation uptake system. This Brucella suis biovar 1 (strain 1330) protein is Divalent metal cation transporter MntH.